Consider the following 237-residue polypeptide: Ribonuclease PH (237 aa).

Residues R86 and 124 to 126 (GTR) each bind phosphate.

It belongs to the RNase PH family. As to quaternary structure, homohexameric ring arranged as a trimer of dimers.

It catalyses the reaction tRNA(n+1) + phosphate = tRNA(n) + a ribonucleoside 5'-diphosphate. Its function is as follows. Phosphorolytic 3'-5' exoribonuclease that plays an important role in tRNA 3'-end maturation. Removes nucleotide residues following the 3'-CCA terminus of tRNAs; can also add nucleotides to the ends of RNA molecules by using nucleoside diphosphates as substrates, but this may not be physiologically important. Probably plays a role in initiation of 16S rRNA degradation (leading to ribosome degradation) during starvation. The protein is Ribonuclease PH of Methylorubrum extorquens (strain PA1) (Methylobacterium extorquens).